A 360-amino-acid chain; its full sequence is DNA replication and repair protein RecF (360 aa).

30–37 is an ATP binding site; the sequence is GQNGSGKT.

Belongs to the RecF family.

The protein localises to the cytoplasm. Its function is as follows. The RecF protein is involved in DNA metabolism; it is required for DNA replication and normal SOS inducibility. RecF binds preferentially to single-stranded, linear DNA. It also seems to bind ATP. This is DNA replication and repair protein RecF from Shewanella baltica (strain OS155 / ATCC BAA-1091).